A 339-amino-acid chain; its full sequence is tRNA pseudouridine synthase D (339 aa).

Asp-80 functions as the Nucleophile in the catalytic mechanism. One can recognise a TRUD domain in the interval 155–311 (GFPNYFTEQR…AKGFSWAFEP (157 aa)).

The protein belongs to the pseudouridine synthase TruD family.

The enzyme catalyses uridine(13) in tRNA = pseudouridine(13) in tRNA. In terms of biological role, responsible for synthesis of pseudouridine from uracil-13 in transfer RNAs. This chain is tRNA pseudouridine synthase D, found in Haemophilus influenzae (strain 86-028NP).